A 1149-amino-acid chain; its full sequence is Potassium channel subfamily U member 1 (1149 aa).

Over 1-24 the chain is Extracellular; sequence MFQTKLRNESWEDLQKMSCTTEIQ. Residues 25–45 traverse the membrane as a helical segment; that stretch reads VAFILSSFMTFISGLIILLIF. Over 46-101 the chain is Cytoplasmic; it reads RLIWRTVKKWQIIKGTGIILELFTSGSIRRNHVRSLHFHGRFRDRIEMLLSAQTFV. The helical transmembrane segment at 102–122 threads the bilayer; the sequence is GQVLVILVFVLSIGSLIIYFI. Residues 123-138 lie on the Extracellular side of the membrane; that stretch reads NSADPVGSCSSYEDKT. A helical transmembrane segment spans residues 139–159; it reads IPVDLVFNAFFSFYFGLRFMA. The Cytoplasmic segment spans residues 160-163; that stretch reads ADDK. The helical transmembrane segment at 164–184 threads the bilayer; sequence IKFWLEMNSIVDIFTIPPTFI. Over 185–188 the chain is Extracellular; sequence SYYL. A helical; Voltage-sensor transmembrane segment spans residues 189 to 209; that stretch reads KSNWLGLRFLRALRLLELPRI. At 210–226 the chain is on the cytoplasmic side; the sequence is LQILRAIKTSNSVKFSK. A helical transmembrane segment spans residues 227-247; it reads LLSIVLSTWFTAAGFIHLVEN. Residues 248–259 lie on the Extracellular side of the membrane; sequence SGDPWLKGRNSQ. The pore-forming intramembrane region spans 260–282; sequence NISYFDSVYLVMATTSTVGFGDV. A Selectivity for potassium motif is present at residues 276–279; that stretch reads TVGF. Residues 283–291 lie on the Extracellular side of the membrane; that stretch reads VAKTSLGRT. Residues 292-312 traverse the membrane as a helical segment; the sequence is FIIFFTLGSLILFANYIPEMV. Topologically, residues 313–1149 are cytoplasmic; it reads ELFANKRKYT…EDPFAYSEPL (837 aa). RCK N-terminal domains are found at residues 331 to 473 and 713 to 884; these read KKFI…DNII and RNHI…EGSL. Residues 829–845 show a composition bias toward low complexity; that stretch reads IDSSSDSSPSVSEETAS. Disordered regions lie at residues 829–851 and 1106–1149; these read IDSSSDSSPSVSEETASCTNGHN and ARNQ…SEPL. Polar residues predominate over residues 1106-1120; it reads ARNQIRTNSSITSQK.

This sequence belongs to the potassium channel family. Calcium-activated (TC 1.A.1.3) subfamily. KCa5.1/KCNU1 sub-subfamily. In terms of assembly, homotetramer; which constitutes the calcium-activated potassium channel. Interacts with LRRC52; this interaction changes some channel gating properties, such as shifting gating to more negative potentials at a given pH. In terms of tissue distribution, testis-specific.

The protein resides in the cell membrane. Its subcellular location is the cell projection. It localises to the cilium. It is found in the flagellum membrane. It catalyses the reaction K(+)(in) = K(+)(out). With respect to regulation, regulated by changes in cytosolic pH; activated by alkalization. VU0546110 acts as a selective inhibitor. The auxiliary subunit LRRC52 shifts the activation of KCNU1 to more negative potentials at a given pH. In terms of biological role, testis-specific potassium channel activated by both intracellular pH and membrane voltage that mediates export of K(+). Represents the primary spermatozoan K(+) current. The channel underlies a pH-triggered membrane hyperpolarization during the process of sperm capacitation, as sperm encounter the alkaline environment near the ovum in the female reproductive tract, thereby playing an essential for male fertility. The chain is Potassium channel subfamily U member 1 (KCNU1) from Macaca fascicularis (Crab-eating macaque).